The chain runs to 269 residues: Indole-3-glycerol phosphate synthase (269 aa).

It belongs to the TrpC family.

The catalysed reaction is 1-(2-carboxyphenylamino)-1-deoxy-D-ribulose 5-phosphate + H(+) = (1S,2R)-1-C-(indol-3-yl)glycerol 3-phosphate + CO2 + H2O. Its pathway is amino-acid biosynthesis; L-tryptophan biosynthesis; L-tryptophan from chorismate: step 4/5. This Roseiflexus sp. (strain RS-1) protein is Indole-3-glycerol phosphate synthase.